Here is a 275-residue protein sequence, read N- to C-terminus: NH(3)-dependent NAD(+) synthetase (275 aa).

An ATP-binding site is contributed by 46 to 53; the sequence is GISGGQDS. Asp-52 contacts Mg(2+). Arg-140 contacts deamido-NAD(+). Thr-160 contacts ATP. Glu-165 is a binding site for Mg(2+). The deamido-NAD(+) site is built by Lys-173 and Asp-180. Lys-189 and Thr-211 together coordinate ATP. 260 to 261 serves as a coordination point for deamido-NAD(+); that stretch reads HK.

Belongs to the NAD synthetase family. In terms of assembly, homodimer.

It catalyses the reaction deamido-NAD(+) + NH4(+) + ATP = AMP + diphosphate + NAD(+) + H(+). It functions in the pathway cofactor biosynthesis; NAD(+) biosynthesis; NAD(+) from deamido-NAD(+) (ammonia route): step 1/1. Its function is as follows. Catalyzes the ATP-dependent amidation of deamido-NAD to form NAD. Uses ammonia as a nitrogen source. This is NH(3)-dependent NAD(+) synthetase from Cronobacter sakazakii (strain ATCC BAA-894) (Enterobacter sakazakii).